A 382-amino-acid polypeptide reads, in one-letter code: MKKVIILGSTGSIGTQTLDVIKNFRENFEIVGLTAYNNVELLSKQIREFNPKVVAVKDEDKANQLRENLKKNVEILTGSKGLQEIVKYDADLVVVAVEGIAGLIPTVTAIQMGKDIALANKEVLVTAGQIVMDLVKKKDISLLPVDSEHSAILQCLRGNDKKEVSRLILTASGGPFRGKKKEDLRKVTVNEALNHPNWKMGKKITIDSATLMNKGFEVIEAKWLFDISEDKIDVIVHPQSIIHSMVEYIDGSVIAQLATADMRIPIHYALNYPTRNYINGMNFLDFSLTTQLTFEKPDLETFRCLSLAYEALKIGGTMTTVLNAADEIAVSLFLNKKIEFLQIAEIIEESMKEHNNIQNPTLDDIINVDEEVKEKIAKKYMR.

Positions 10, 11, 12, 13, 38, and 120 each coordinate NADPH. Lys-121 provides a ligand contact to 1-deoxy-D-xylulose 5-phosphate. Glu-122 is a binding site for NADPH. Residue Asp-146 coordinates Mn(2+). Ser-147, Glu-148, Ser-172, and His-195 together coordinate 1-deoxy-D-xylulose 5-phosphate. Glu-148 is a Mn(2+) binding site. Gly-201 lines the NADPH pocket. 1-deoxy-D-xylulose 5-phosphate contacts are provided by Ser-208, Asn-213, Lys-214, and Glu-217. Glu-217 lines the Mn(2+) pocket.

Belongs to the DXR family. Mg(2+) serves as cofactor. Mn(2+) is required as a cofactor.

The enzyme catalyses 2-C-methyl-D-erythritol 4-phosphate + NADP(+) = 1-deoxy-D-xylulose 5-phosphate + NADPH + H(+). It functions in the pathway isoprenoid biosynthesis; isopentenyl diphosphate biosynthesis via DXP pathway; isopentenyl diphosphate from 1-deoxy-D-xylulose 5-phosphate: step 1/6. Catalyzes the NADPH-dependent rearrangement and reduction of 1-deoxy-D-xylulose-5-phosphate (DXP) to 2-C-methyl-D-erythritol 4-phosphate (MEP). This Thermoanaerobacter sp. (strain X514) protein is 1-deoxy-D-xylulose 5-phosphate reductoisomerase.